The following is a 361-amino-acid chain: Protein RecA (361 aa).

77 to 84 serves as a coordination point for ATP; the sequence is GPESSGKT.

This sequence belongs to the RecA family.

It localises to the cytoplasm. In terms of biological role, can catalyze the hydrolysis of ATP in the presence of single-stranded DNA, the ATP-dependent uptake of single-stranded DNA by duplex DNA, and the ATP-dependent hybridization of homologous single-stranded DNAs. It interacts with LexA causing its activation and leading to its autocatalytic cleavage. The polypeptide is Protein RecA (Rhizobium etli).